Reading from the N-terminus, the 946-residue chain is Zinc finger CCCH-type antiviral protein 1 (946 aa).

The tract at residues 1–254 (MTDPEVFCFI…DRSKSRDRFH (254 aa)) is N-terminal domain. The Nuclear localization signal signature appears at 69–76 (RARVCRRK). 4 C3H1-type zinc fingers span residues 73 to 86 (CRRKYCQRPCDSLH), 87 to 113 (LCKLNLLGRCHYAQSQRNLCKYSHDVL), 150 to 172 (CKSYKGEGRKQICGQPQPCERLH), and 173 to 194 (ICEHFTRGNCSYLNCLRSHNLM). Disordered regions lie at residues 221–283 (NKHT…KDPL) and 302–354 (RAQL…AAGF). Residues 224–254 (TRRNPPSMRAPHPHRRGGAHRDRSKSRDRFH) form a binding to EXOSC5 region. The span at 242–257 (AHRDRSKSRDRFHHNS) shows a compositional bias: basic and acidic residues. Phosphoserine is present on Ser257. Residue Ser262 is modified to Phosphoserine; by GSK3-beta. Phosphoserine occurs at positions 265, 269, and 273. A Phosphothreonine modification is found at Thr277. Positions 283-290 (LEDVSADV) match the Nuclear export signal motif. Phosphoserine is present on residues Ser324 and Ser350. The short motif at 412–413 (KR) is the Nuclear localization signal element. Phosphoserine is present on Ser425. A disordered region spans residues 461 to 491 (NPAWPGTSTHNGPNGFSQIMDETPNVSKSSP). Polar residues predominate over residues 466–477 (GTSTHNGPNGFS). Position 508 is a phosphotyrosine (Tyr508). Residues 523-570 (GETTTPVQGSNRLPPSPLSSSTSHRVAASGSPGKSSTHASVSPASEPS) are disordered. Residues 524-533 (ETTTPVQGSN) are compositionally biased toward polar residues. At Ser553 the chain carries Phosphoserine. Residues 554–567 (PGKSSTHASVSPAS) are compositionally biased toward polar residues. Ser583 and Ser680 each carry phosphoserine. One can recognise a WWE domain in the interval 684-771 (FVEKTLNSVF…ASKTQRHVVR (88 aa)). The 142-residue stretch at 805–946 (SPQRNASTVS…SLDSSGLQRK (142 aa)) folds into the PARP catalytic domain.

This sequence belongs to the ARTD/PARP family. As to quaternary structure, homodimer or homooligomer. Homooligomerization is essential for its antiviral activity. Interacts with EXOSC5. Interacts (via N-terminal domain) with DDX17 in an RNA-independent manner. Interacts with EXOSC3, EXOSC7, DCP2 and DCP1A. Interacts with PARN in an RNA-independent manner. Interacts with XRN1 in an RNA-dependent manner. Interacts (via N-terminal domain) with DHX30 (via N-terminus) in an RNA-independent manner. Isoform 2 interacts (via zinc-fingers) with RIGI in an RNA-dependent manner. Post-translationally, phosphorylation at Ser-273 is essential for sequential phosphorylation of Ser-269, Ser-265, Ser-262 and Ser-257 by GSK3-beta. Phosphorylation by GSK3-beta enhances its antiviral activity.

It is found in the cytoplasm. Its subcellular location is the nucleus. In terms of biological role, antiviral protein which inhibits the replication of viruses by recruiting the cellular RNA degradation machineries to degrade the viral mRNAs. Binds to a ZAP-responsive element (ZRE) present in the target viral mRNA, recruits cellular poly(A)-specific ribonuclease PARN to remove the poly(A) tail, and the 3'-5' exoribonuclease complex exosome to degrade the RNA body from the 3'-end. It also recruits the decapping complex DCP1-DCP2 through RNA helicase p72 (DDX17) to remove the cap structure of the viral mRNA to initiate its degradation from the 5'-end. Its target viruses belong to families which include retroviridae: human immunodeficiency virus type 1 (HIV-1) and moloney and murine leukemia virus (MoMLV), filoviridae: ebola virus (EBOV) and marburg virus (MARV), togaviridae: sindbis virus (SINV) and Ross river virus (RRV). Specifically targets the multiply spliced but not unspliced or singly spliced HIV-1 mRNAs for degradation. Isoform 1 is a more potent viral inhibitor than isoform 2. Isoform 2 acts as a positive regulator of RIG-I signaling resulting in activation of the downstream effector IRF3 leading to the expression of type I IFNs and IFN stimulated genes (ISGs). The polypeptide is Zinc finger CCCH-type antiviral protein 1 (Zc3hav1) (Mus musculus (Mouse)).